Consider the following 144-residue polypeptide: Hemoglobin embryonic subunit alpha (144 aa).

A Globin domain is found at 3-144; sequence SLSAKDKDVV…LALALAEKYR (142 aa). O2 is bound at residue His61. His90 is a heme b binding site.

The protein belongs to the globin family. As to quaternary structure, heterotetramer of two alpha chains and two beta chains. Red blood cells.

Functionally, involved in oxygen transport from gills to the various peripheral tissues. This chain is Hemoglobin embryonic subunit alpha, found in Oryzias latipes (Japanese rice fish).